The chain runs to 383 residues: Opsin Rh4 (383 aa).

Over 1–57 the chain is Extracellular; it reads MDIAGSLCNASEGPVLRPEARVSGNGDLQFLGWNVPPDQIQHIPEHWLTQLEPPASM. The N-linked (GlcNAc...) asparagine glycan is linked to N9. Residues 58–82 form a helical membrane-spanning segment; the sequence is HYMLGVFYIFLFCASTVGNGMVIWI. Residues 83 to 94 lie on the Cytoplasmic side of the membrane; the sequence is FSTSKALRTPSN. A helical transmembrane segment spans residues 95–117; it reads MFVLNLAVFDFIMCLKAPIFIYN. The Extracellular portion of the chain corresponds to 118–133; it reads SFHRGFALGNTGCQIF. An intrachain disulfide couples C130 to C207. A helical transmembrane segment spans residues 134 to 153; the sequence is AAIGSYSGIGAGMTNAAIGY. At 154-171 the chain is on the cytoplasmic side; that stretch reads DRLNVITKPMNRNMTFTK. The chain crosses the membrane as a helical span at residues 172-196; it reads AIIMNVIIWLYCTPWVVLPLTQFWD. The Extracellular portion of the chain corresponds to 197-220; the sequence is RFVPEGYLTSCTFDYLTDNFDTRL. A helical membrane pass occupies residues 221–248; that stretch reads FVGTIFFFSFVCPTLMIIYYYSQIVGHV. The Cytoplasmic segment spans residues 249–284; that stretch reads FSHEKALREQAKKMNVESLRSNVDKSKDTAEIRIAK. Residues 285–308 traverse the membrane as a helical segment; the sequence is AAITICFLFFVSWTPYGVMSLIGA. Over 309–316 the chain is Extracellular; sequence FGDKSLLT. Residues 317–341 traverse the membrane as a helical segment; sequence PGATMIPACTCKLVACIDPFVYAIS. K328 bears the N6-(retinylidene)lysine mark. Residues 342 to 383 lie on the Cytoplasmic side of the membrane; that stretch reads HPRYRMELQKRCPWLAIDEKAPESSSAASTTTTQEQQQTTAA. The segment at 361-383 is disordered; the sequence is KAPESSSAASTTTTQEQQQTTAA. Residues 364–383 show a composition bias toward low complexity; it reads ESSSAASTTTTQEQQQTTAA.

This sequence belongs to the G-protein coupled receptor 1 family. Opsin subfamily. Post-translationally, phosphorylated on some or all of the serine and threonine residues present in the C-terminal region.

The protein resides in the membrane. Functionally, visual pigments are the light-absorbing molecules that mediate vision. They consist of an apoprotein, opsin, covalently linked to cis-retinal. The protein is Opsin Rh4 (Rh4) of Drosophila virilis (Fruit fly).